Reading from the N-terminus, the 259-residue chain is Type III pantothenate kinase (259 aa).

ATP is bound at residue 6–13 (DVGNTNIV). Substrate-binding positions include tyrosine 100 and 107 to 110 (GADR). Aspartate 109 serves as the catalytic Proton acceptor. Aspartate 129 serves as a coordination point for K(+). Threonine 132 lines the ATP pocket. Substrate is bound at residue threonine 184.

Belongs to the type III pantothenate kinase family. Homodimer. It depends on NH4(+) as a cofactor. K(+) is required as a cofactor.

It localises to the cytoplasm. The enzyme catalyses (R)-pantothenate + ATP = (R)-4'-phosphopantothenate + ADP + H(+). The protein operates within cofactor biosynthesis; coenzyme A biosynthesis; CoA from (R)-pantothenate: step 1/5. In terms of biological role, catalyzes the phosphorylation of pantothenate (Pan), the first step in CoA biosynthesis. The sequence is that of Type III pantothenate kinase from Clostridium kluyveri (strain NBRC 12016).